Consider the following 220-residue polypeptide: Fructose-6-phosphate aldolase (220 aa).

Lys-85 serves as the catalytic Schiff-base intermediate with substrate.

The protein belongs to the transaldolase family. Type 3A subfamily. As to quaternary structure, homodecamer.

The protein localises to the cytoplasm. It catalyses the reaction beta-D-fructose 6-phosphate = dihydroxyacetone + D-glyceraldehyde 3-phosphate. Its function is as follows. Catalyzes the reversible formation of fructose 6-phosphate from dihydroxyacetone and D-glyceraldehyde 3-phosphate via an aldolization reaction. This Salmonella gallinarum (strain 287/91 / NCTC 13346) protein is Fructose-6-phosphate aldolase.